The sequence spans 130 residues: Protein LLP homolog (130 aa).

A compositionally biased stretch (basic residues) spans 1–21; the sequence is MAKSLRSKWKRKMRAEKRKKN. Disordered regions lie at residues 1-23 and 57-76; these read MAKS…KNAP and QEKM…EKDD. A coiled-coil region spans residues 10-78; sequence KRKMRAEKRK…GADEEKDDMK (69 aa). A Glycyl lysine isopeptide (Lys-Gly) (interchain with G-Cter in SUMO2) cross-link involves residue K78. Basic residues predominate over residues 104 to 124; the sequence is RQRKRLKAKREKKRGKSRAKA. The interval 104-130 is disordered; it reads RQRKRLKAKREKKRGKSRAKAAKGLAW.

It belongs to the learning-associated protein family. As to quaternary structure, interacts with CTCF, MYO1C and with the transcriptional machinery, including RNA polymerase II and TBP. As to expression, widely expressed, with high levels in testis and spleen and low levels in heart. In the brain, expressed in the cortex and hippocampus, and at very low levels in the cerebellum.

The protein localises to the nucleus. Its subcellular location is the nucleolus. It is found in the chromosome. In terms of biological role, in hippocampal neurons, regulates dendritic and spine growth and synaptic transmission. The polypeptide is Protein LLP homolog (Llph) (Mus musculus (Mouse)).